A 524-amino-acid chain; its full sequence is Cytochrome P450 monooxygenase ankB (524 aa).

A helical membrane pass occupies residues 22–42 (FHALSIQAPGLLLGTLLFYLF). Cysteine 466 serves as a coordination point for heme.

The protein belongs to the cytochrome P450 family. Heme is required as a cofactor.

It is found in the membrane. It carries out the reaction cyclo(L-arginyl-tyrosyl) + reduced [NADPH--hemoprotein reductase] + O2 = cyclo(L-arginyl-L-dehydrotyrosyl) + oxidized [NADPH--hemoprotein reductase] + 2 H2O + H(+). It participates in alkaloid biosynthesis. Functionally, cytochrome P450 monooxygenase; part of the ank cluster that mediates the biosynthesis of NK13650 C, a highly modified cyclo-arginine-tyrosine dipeptide. AnkB is responsible for desaturation of the ankA product cyclo-Arg-Tyr diketopiperazine, likely through hydroxylation of the benzylic position followed by dehydration to yield a dehydro-cyclodipeptide. Within the pathway, the cyclodipeptide synthase ankA acts as the scaffold-generating enzyme and is responsible for formation of the cyclo-Arg-Tyr diketopiperazine (cRY) from L-Arg and L-Tyr. The ankA product cRY is desaturated by the cytochrome P450 monooxygenase ankB to yield a dehydro-cyclodipeptide intermediate. The FAD-dependent monooxygenase ankC then installs the m-OH, ankD catalyzes the attachment of L-homoserine, and ankE ligates citrate to the ankD product to yield NK13650 B. The O-methyltransferase ankF is responsible for methylation of the C-17 phenol group of NK13650 B to produce NK13650 D. Amidation of NK13650 D with L-Asp by ankG then leads to the production of NK13650 C, whereas amidation of NK13650 B produces NK13650 A. The polypeptide is Cytochrome P450 monooxygenase ankB (Aspergillus thermomutatus (Neosartorya pseudofischeri)).